The chain runs to 67 residues: DNA-directed RNA polymerase subunit omega (67 aa).

It belongs to the RNA polymerase subunit omega family. As to quaternary structure, the RNAP catalytic core consists of 2 alpha, 1 beta, 1 beta' and 1 omega subunit. When a sigma factor is associated with the core the holoenzyme is formed, which can initiate transcription.

It carries out the reaction RNA(n) + a ribonucleoside 5'-triphosphate = RNA(n+1) + diphosphate. Its function is as follows. Promotes RNA polymerase assembly. Latches the N- and C-terminal regions of the beta' subunit thereby facilitating its interaction with the beta and alpha subunits. The sequence is that of DNA-directed RNA polymerase subunit omega from Polaromonas naphthalenivorans (strain CJ2).